Here is a 332-residue protein sequence, read N- to C-terminus: Isopentenyl-diphosphate delta-isomerase (332 aa).

6-7 (RK) serves as a coordination point for substrate. Residues 65–67 (AMT), Ser95, and Asn123 contribute to the FMN site. 95–97 (SGR) provides a ligand contact to substrate. Gln157 lines the substrate pocket. Glu158 lines the Mg(2+) pocket. FMN-binding positions include Lys187, Thr217, 264 to 266 (GVY), Ala285, and 285 to 286 (AR).

The protein belongs to the IPP isomerase type 2 family. As to quaternary structure, homooctamer. Dimer of tetramers. It depends on FMN as a cofactor. Requires NADPH as cofactor. Mg(2+) serves as cofactor.

It is found in the cytoplasm. The enzyme catalyses isopentenyl diphosphate = dimethylallyl diphosphate. With respect to regulation, competitively inhibited by N,N-dimethyl-2-amino-1-ethyl diphosphate (NIPP) and isopentyl diphosphate. In terms of biological role, involved in the biosynthesis of isoprenoids. Catalyzes the 1,3-allylic rearrangement of the homoallylic substrate isopentenyl (IPP) to its allylic isomer, dimethylallyl diphosphate (DMAPP). This Thermus thermophilus (strain ATCC BAA-163 / DSM 7039 / HB27) protein is Isopentenyl-diphosphate delta-isomerase.